The primary structure comprises 300 residues: uncharacterized protein (300 aa).

It belongs to the chlamydial CPn_0593/CT_474/TC_0759 family.

This is an uncharacterized protein from Chlamydia muridarum (strain MoPn / Nigg).